Consider the following 258-residue polypeptide: Imidazole glycerol phosphate synthase subunit HisF (258 aa).

Residues aspartate 12 and aspartate 131 contribute to the active site.

Belongs to the HisA/HisF family. In terms of assembly, heterodimer of HisH and HisF.

It localises to the cytoplasm. It catalyses the reaction 5-[(5-phospho-1-deoxy-D-ribulos-1-ylimino)methylamino]-1-(5-phospho-beta-D-ribosyl)imidazole-4-carboxamide + L-glutamine = D-erythro-1-(imidazol-4-yl)glycerol 3-phosphate + 5-amino-1-(5-phospho-beta-D-ribosyl)imidazole-4-carboxamide + L-glutamate + H(+). It functions in the pathway amino-acid biosynthesis; L-histidine biosynthesis; L-histidine from 5-phospho-alpha-D-ribose 1-diphosphate: step 5/9. Its function is as follows. IGPS catalyzes the conversion of PRFAR and glutamine to IGP, AICAR and glutamate. The HisF subunit catalyzes the cyclization activity that produces IGP and AICAR from PRFAR using the ammonia provided by the HisH subunit. The polypeptide is Imidazole glycerol phosphate synthase subunit HisF (Nitrosomonas europaea (strain ATCC 19718 / CIP 103999 / KCTC 2705 / NBRC 14298)).